The chain runs to 220 residues: Membrane steroid-binding protein 1 (220 aa).

A helical transmembrane segment spans residues Val22–Phe42. Positions Glu74 to Lys171 constitute a Cytochrome b5 heme-binding domain. Positions Glu74 to Lys171 are steroid-binding. Positions Gly174–Glu220 are disordered. Polar residues predominate over residues Glu178–Gly200. A compositionally biased stretch (basic and acidic residues) spans Val203–Glu220.

It belongs to the cytochrome b5 family. MAPR subfamily. As to quaternary structure, interacts with BAK1 (via extracellular region). Expressed in cotyledons, stems, roots, leaves, flower and silique stalks, pistils and stigmas, but not in anthers.

It localises to the cell membrane. It is found in the endosome membrane. MSBP1 can bind to multiple steroid compounds with different affinities. Negatively regulates cell elongation and brassinosteroid signaling. May act as a coreceptor with BAK1 and enhances its endocytosis. The protein is Membrane steroid-binding protein 1 (MSBP1) of Arabidopsis thaliana (Mouse-ear cress).